The sequence spans 582 residues: V-type ATP synthase alpha chain (582 aa).

231 to 238 (GPFGSGKT) serves as a coordination point for ATP.

Belongs to the ATPase alpha/beta chains family.

The enzyme catalyses ATP + H2O + 4 H(+)(in) = ADP + phosphate + 5 H(+)(out). Produces ATP from ADP in the presence of a proton gradient across the membrane. The V-type alpha chain is a catalytic subunit. This chain is V-type ATP synthase alpha chain, found in Deinococcus geothermalis (strain DSM 11300 / CIP 105573 / AG-3a).